Reading from the N-terminus, the 1055-residue chain is Bifunctional fucokinase/GDP-fucose pyrophosphorylase (1055 aa).

Residues 34 to 565 (WDAIVLTAAS…SSQRVSLEEL (532 aa)) form a GDP-fucose pyrophosphorylase region. The tract at residues 693–1055 (GKSHSENHIS…VKVYNWSICI (363 aa)) is L-fucokinase. Residue 826 to 836 (PRGSGLGTSSI) coordinates ATP.

This sequence belongs to the GHMP kinase family. The cofactor is Mn(2+). Requires Mg(2+) as cofactor. As to expression, ubiquitous. Highest expression in flower buds.

It carries out the reaction L-fucose + ATP = beta-L-fucose 1-phosphate + ADP + H(+). The enzyme catalyses beta-L-fucose 1-phosphate + GTP + H(+) = GDP-beta-L-fucose + diphosphate. Functionally, bifunctional enzyme involved in the salvage pathway which converts free L-fucose to GDP-L-fucose. Catalyzes two successive reactions, the ATP-dependent phosphorylation of L-fucose to L-fucose 1-phosphate, and its guanylylation to GDP-L-fucose. The sugar-1-kinase activity has a strict substrate specificity for L-fucose and ATP. The pyrophosphorylase activity has a strict substrate specificity for L-fucose 1-phosphate and GTP. This is Bifunctional fucokinase/GDP-fucose pyrophosphorylase (FKGP) from Arabidopsis thaliana (Mouse-ear cress).